Reading from the N-terminus, the 385-residue chain is Isocitrate dehydrogenase [NAD] subunit beta, mitochondrial (385 aa).

A mitochondrion-targeting transit peptide spans 1-33; that stretch reads MAALSRVRWLTRALVAAPNPGAWRSLCTSTVAQ. Residue K199 is modified to N6-acetyllysine.

It belongs to the isocitrate and isopropylmalate dehydrogenases family. In terms of assembly, heterooligomer of subunits alpha (IDH3A), beta (IDH3B), and gamma (IDH3G) in the apparent ratio of 2:1:1. The heterodimer containing one IDH3A and one IDH3B subunit and the heterodimer containing one IDH3A and one IDH3G subunit assemble into a heterotetramer (which contains two subunits of IDH3A, one of IDH3B and one of IDH3G) and further into the heterooctamer. Isoform A is predominant in heart muscle; also found in brain, kidney and liver. Isoform B is present in kidney and liver.

The protein resides in the mitochondrion. The heterotetramer and the heterodimer composed of IDH3A and IDH3G subunits can be allosterically activated by citrate (CIT) or/and ADP, and the two activators can act independently or synergistically. The heterodimer composed of IDH3A and IDH3B subunits cannot be allosterically regulated and the allosteric regulation of the heterotetramer is through the IDH3G subunit and not the IDH3B subunit. The IDH3G subunit contains the allosteric site which consists of a CIT-binding site and an ADP-binding site, and the binding of CIT and ADP causes conformational changes at the allosteric site which are transmitted to the active site in the catalytic subunit (IDH3A) through a cascade of conformational changes at the heterodimer interface, leading to stabilization of the isocitrate-binding at the active site and thus activation of the enzyme. ATP can activate the heterotetramer and the heterodimer composed of IDH3A and IDH3G subunits at low concentrations but inhibits their activities at high concentrations, whereas ATP exhibits only inhibitory effect on the heterodimer composed of IDH3A and IDH3B subunits. Its function is as follows. Plays a structural role to facilitate the assembly and ensure the full activity of the enzyme catalyzing the decarboxylation of isocitrate (ICT) into alpha-ketoglutarate. The heterodimer composed of the alpha (IDH3A) and beta (IDH3B) subunits and the heterodimer composed of the alpha (IDH3A) and gamma (IDH3G) subunits, have considerable basal activity but the full activity of the heterotetramer (containing two subunits of IDH3A, one of IDH3B and one of IDH3G) requires the assembly and cooperative function of both heterodimers. The chain is Isocitrate dehydrogenase [NAD] subunit beta, mitochondrial (IDH3B) from Bos taurus (Bovine).